The sequence spans 144 residues: MFRRSVSFVRSHVLRSFSSQPVVPVTPIVKNPASQGAGTIKLEQSTVELLERLSLVDFSNAEAVSRLEEAVKFASVIMNVDTTGVRPMVTPLEDTVLRLRDDVAEKCSSEDVLKNAAVIEEDYFVAPPGNIPLEPKANYGLGNS.

A mitochondrion-targeting transit peptide spans Met-1 to Phe-17.

The protein belongs to the GatC family. As to quaternary structure, subunit of the heterotrimeric GatCAB amidotransferase (AdT) complex, composed of A, B and C subunits.

Its subcellular location is the mitochondrion. The catalysed reaction is L-glutamyl-tRNA(Gln) + L-glutamine + ATP + H2O = L-glutaminyl-tRNA(Gln) + L-glutamate + ADP + phosphate + H(+). Allows the formation of correctly charged Gln-tRNA(Gln) through the transamidation of misacylated Glu-tRNA(Gln) in the mitochondria. The reaction takes place in the presence of glutamine and ATP through an activated gamma-phospho-Glu-tRNA(Gln). In Ixodes scapularis (Black-legged tick), this protein is Glutamyl-tRNA(Gln) amidotransferase subunit C, mitochondrial.